The primary structure comprises 203 residues: Ras-like protein family member 10A (203 aa).

The tract at residues 1 to 203 (MGGSLRVAVL…ALHPARCSLM (203 aa)) is small GTPase-like. 11 to 18 (GAPGVGKT) is a GTP binding site. The Effector region motif lies at 33–42 (HRPTDSPCLY). GTP-binding positions include 59-62 (DGDV) and 129-132 (NKRD). Cys-200 carries the post-translational modification Cysteine methyl ester. The S-farnesyl cysteine moiety is linked to residue Cys-200. Positions 201–203 (SLM) are cleaved as a propeptide — removed in mature form.

The protein belongs to the small GTPase superfamily. Ras family. Post-translationally, isoprenylation is essential for nucleolar localization, and the proliferation-inhibiting activity of RASL10A.

It is found in the cell membrane. The protein resides in the nucleus. It localises to the nucleolus. It catalyses the reaction GTP + H2O = GDP + phosphate + H(+). Potent inhibitor of cellular proliferation. The chain is Ras-like protein family member 10A (Rasl10a) from Mus musculus (Mouse).